A 245-amino-acid chain; its full sequence is DNA polymerase sliding clamp (245 aa).

Belongs to the PCNA family. In terms of assembly, homotrimer. The subunits circularize to form a toroid; DNA passes through its center. Replication factor C (RFC) is required to load the toroid on the DNA.

Its function is as follows. Sliding clamp subunit that acts as a moving platform for DNA processing. Responsible for tethering the catalytic subunit of DNA polymerase and other proteins to DNA during high-speed replication. This is DNA polymerase sliding clamp from Methanococcoides burtonii (strain DSM 6242 / NBRC 107633 / OCM 468 / ACE-M).